The following is a 91-amino-acid chain: Early E3B 10.4 kDa protein (91 aa).

The signal sequence occupies residues 1–21 (MVTVLLIFLCLPVIFSSSTFA). Over 22-33 (AVSDLDPECLAP) the chain is Lumenal. Residues 34–56 (FAVYLIFTFVTATCVCSIITLLI) form a helical membrane-spanning segment. Topologically, residues 57-91 (TSLQFFDYYYVRIVYRRHHPRYQNPQIAALLQLQP) are cytoplasmic.

This sequence belongs to the adenoviridae E3B family.

It is found in the host endoplasmic reticulum membrane. In terms of biological role, down-regulates the EGF receptor. This Homo sapiens (Human) protein is Early E3B 10.4 kDa protein.